Reading from the N-terminus, the 386-residue chain is Patatin-16 (386 aa).

The signal sequence occupies residues 1–23 (MATTKSFLILIVMILATTSSTFA). The 198-residue stretch at 32–229 (LSIDGGGIKG…TVADPALLSV (198 aa)) folds into the PNPLA domain. Positions 36 to 41 (GGGIKG) match the GXGXXG motif. The short motif at 75-79 (GTSTG) is the GXSXG element. Ser-77 (nucleophile) is an active-site residue. Asn-115 carries N-linked (GlcNAc...) asparagine glycosylation. The Proton acceptor role is filled by Asp-215. The DGA/G signature appears at 215-217 (DGA). A coiled-coil region spans residues 360-384 (ETYEEALKRFAKLLSDRKKLRANKA).

The protein belongs to the patatin family.

Its subcellular location is the vacuole. Its function is as follows. Probable lipolytic acyl hydrolase (LAH), an activity which is thought to be involved in the response of tubers to pathogens. In Solanum tuberosum (Potato), this protein is Patatin-16.